We begin with the raw amino-acid sequence, 338 residues long: 1-aminocyclopropane-1-carboxylate deaminase (338 aa).

At Lys51 the chain carries N6-(pyridoxal phosphate)lysine. Ser78 functions as the Nucleophile in the catalytic mechanism.

The protein belongs to the ACC deaminase/D-cysteine desulfhydrase family. Homotrimer. Requires pyridoxal 5'-phosphate as cofactor.

It catalyses the reaction 1-aminocyclopropane-1-carboxylate + H2O = 2-oxobutanoate + NH4(+). Functionally, catalyzes a cyclopropane ring-opening reaction, the irreversible conversion of 1-aminocyclopropane-1-carboxylate (ACC) to ammonia and alpha-ketobutyrate. Allows growth on ACC as a nitrogen source. The protein is 1-aminocyclopropane-1-carboxylate deaminase of Pseudomonas sp. (strain ACP).